Reading from the N-terminus, the 539-residue chain is Chaperonin GroEL (539 aa).

ATP contacts are provided by residues 29–32 (TLGP), 86–90 (DGTTT), G413, and D492.

It belongs to the chaperonin (HSP60) family. As to quaternary structure, forms a cylinder of 14 subunits composed of two heptameric rings stacked back-to-back. Interacts with the co-chaperonin GroES.

Its subcellular location is the cytoplasm. The enzyme catalyses ATP + H2O + a folded polypeptide = ADP + phosphate + an unfolded polypeptide.. In terms of biological role, together with its co-chaperonin GroES, plays an essential role in assisting protein folding. The GroEL-GroES system forms a nano-cage that allows encapsulation of the non-native substrate proteins and provides a physical environment optimized to promote and accelerate protein folding. This Fusobacterium nucleatum subsp. nucleatum (strain ATCC 25586 / DSM 15643 / BCRC 10681 / CIP 101130 / JCM 8532 / KCTC 2640 / LMG 13131 / VPI 4355) protein is Chaperonin GroEL.